The sequence spans 302 residues: Sulfotransferase 1C4 (302 aa).

55 to 60 (KAGTTW) serves as a coordination point for 3'-phosphoadenylyl sulfate. A substrate-binding site is contributed by 113-115 (KTH). The active-site Proton acceptor is the H115. 3'-phosphoadenylyl sulfate contacts are provided by residues R137, S145, Y200, 234-239 (TSFDVM), and 262-266 (FMRKG).

Belongs to the sulfotransferase 1 family. As to expression, expressed at high levels in fetal lung and kidney and at low levels in fetal heart, adult kidney, ovary and spinal cord.

It is found in the cytoplasm. Its subcellular location is the cytosol. The enzyme catalyses a phenol + 3'-phosphoadenylyl sulfate = an aryl sulfate + adenosine 3',5'-bisphosphate + H(+). The catalysed reaction is 17beta-estradiol + 3'-phosphoadenylyl sulfate = 17beta-estradiol 3-sulfate + adenosine 3',5'-bisphosphate + H(+). It catalyses the reaction bisphenol A + 3'-phosphoadenylyl sulfate = bisphenyl A sulfate + adenosine 3',5'-bisphosphate + H(+). Its function is as follows. Sulfotransferase that utilizes 3'-phospho-5'-adenylyl sulfate (PAPS) as sulfonate donor to catalyze the sulfate conjugation of phenolic compounds. Can also sulfonate estrogenic compounds, however, the dietary flavonoids (phytoestrogen) and environmental estrogens, like bisphenol A are better substrates than 17beta-estradiol (E2). Mediates the sulfation of doxorubicin and its analog epirubicin, two antitumor anthracyclines. This chain is Sulfotransferase 1C4, found in Homo sapiens (Human).